The following is a 356-amino-acid chain: Cyclin-dependent kinase 5 activator 1 (356 aa).

Disordered stretches follow at residues 1-53 (MGAN…AKES) and 66-99 (IQPV…FTRN). Low complexity-rich tracts occupy residues 40 to 49 (SNTSSRSSSN) and 71 to 92 (SRRS…SSDS).

Belongs to the cyclin-dependent kinase 5 activator family. As to quaternary structure, heterodimer composed of a catalytic subunit cdk-5 and a regulatory subunit cdka-1. Interaction with cdka-1 is required for cdk-5 activation. In terms of tissue distribution, expressed in all classes of neurons in the ventral cord.

It localises to the cytoplasm. It is found in the cell projection. The protein localises to the dendrite. The protein resides in the axon. Its function is as follows. Activator of the kinase cdk-5. In several motor neurons, promotes the polarized trafficking of synaptic vesicles and dense-core vesicles. In the ventral nerve cord, regulates the synaptic localization of the glutamate receptor, glr-1. In DA motor neurons, regulates axonal transport of synaptic vesicle precursors by inhibiting dynein-mediated retrograde transport. Regulates the polarized distribution of dense-core vesicles in DB motor neurons. May regulate these processes in association with cdk-5. May also play a role in GABAergic synaptic vesicle localization in the ventral nerve cord. This is Cyclin-dependent kinase 5 activator 1 from Caenorhabditis elegans.